A 1120-amino-acid chain; its full sequence is Elongation factor-like GTPase 1 (1120 aa).

Positions 17-272 constitute a tr-type G domain; that stretch reads ANIRNICVLA…LMKTLWGDYY (256 aa). GTP contacts are provided by residues 26–33, 92–96, and 146–149; these read AHVDHGKT, DSPGH, and NKID. Residues 430 to 496 form a disordered region; sequence PRPLTQEEIA…VESMTPKPVL (67 aa). Composition is skewed to basic and acidic residues over residues 438–452 and 475–484; these read IAQRRERARQRHAEK and PKGEEPRGDE. Lys-528 is modified (N6-acetyllysine). The segment at 907–930 is disordered; the sequence is ASDLAKEGQEENETCSGGNENQEL. Residues 920-930 are compositionally biased toward polar residues; that stretch reads TCSGGNENQEL.

This sequence belongs to the TRAFAC class translation factor GTPase superfamily. Classic translation factor GTPase family. In terms of assembly, associates with the 60S ribosomal subunit. Found in a complex consisting of the 60S ribosomal subunit, SBDS and EFL1. Interacts with SBDS and binds to GTP and GDP; the interaction with SBDS decreases EFL1 affinity for GDP and facilitates GDP release. In terms of tissue distribution, expressed at low levels in brain. Expression is highly increased in glioma tissues.

It catalyses the reaction GTP + H2O = GDP + phosphate + H(+). GTPase activity is stimulated in the presence of 60S ribosome subunits. GTPase involved in the biogenesis of the 60S ribosomal subunit and translational activation of ribosomes. Together with SBDS, triggers the GTP-dependent release of EIF6 from 60S pre-ribosomes in the cytoplasm, thereby activating ribosomes for translation competence by allowing 80S ribosome assembly and facilitating EIF6 recycling to the nucleus, where it is required for 60S rRNA processing and nuclear export. The chain is Elongation factor-like GTPase 1 from Homo sapiens (Human).